Reading from the N-terminus, the 681-residue chain is MAKIKKKGTSGQAKNYITRTQAVRKLQISLPDFRRLCIFKGIYPREPRNKKKAAKNSTASTTFYYTKDIQYLLHEPLLRKFRDQKALSKKIARSLGRGEVSDAARLEKNHAPQLTLDHIIKERYPTFIDALRDLDDALSLLFLFANLPSTAHVPPKTIALCQRLCHEFQHYLIVTNSLRKSFLSIKGIYYQATIQGQDIMWLVPYRFVQRVNGDVDYRIMATFVDFYTTLLGFVNFRLYSTLGLRYPPKFDTRSDENGAELAAFTLEGRAVGETTKAIEGTKQTSSTANKEVSQDVQAKVDKVIKSAGLDQTKDDQAVQATEESTEEIDKFEPAAPEADTLLQPDISGDTAGALFAPFTFYISREAPKAPLEFILRSFGCKRIGWDAVLGDGAFTHDETDTRITHQIVDRPALPESSLPAVPAASENGAGAVQKVKPGTRIPGRTYIQPQWIWDCINEGKLLRPDLYAPGATLPPHLSPWVKPTRGAYDPRASLAEQEEEGEAEIAAEEEEEDSDEEMEEATDGKKVDAKAEDSAEEENEDEDDSVDGGMDVAGTDDDEDESEEEMEDEFGGFEEEAASESEDEEESARTQHQKELEAEAAGLPFSSSSAGGDSTKKKSSQAKKVASKKRKEEEELERQKMMMSRKKRKLLEKMMYSNKKQSEEAAKLRSKRRKLEKGAEK.

Positions 350–469 (TAGALFAPFT…KLLRPDLYAP (120 aa)) constitute a BRCT domain. The segment at 489–681 (DPRASLAEQE…RRKLEKGAEK (193 aa)) is disordered. Residues 491 to 527 (RASLAEQEEEGEAEIAAEEEEEDSDEEMEEATDGKKV) adopt a coiled-coil conformation. The span at 496-521 (EQEEEGEAEIAAEEEEEDSDEEMEEA) shows a compositional bias: acidic residues. Positions 522–533 (TDGKKVDAKAED) are enriched in basic and acidic residues. Composition is skewed to acidic residues over residues 534 to 546 (SAEE…DDSV) and 554 to 586 (GTDD…DEEE). Residues 574-681 (EEEAASESED…RRKLEKGAEK (108 aa)) are a coiled coil. A compositionally biased stretch (basic and acidic residues) spans 587–597 (SARTQHQKELE). Basic residues predominate over residues 617–629 (KKSSQAKKVASKK). Basic and acidic residues predominate over residues 630–640 (RKEEEELERQK).

The protein belongs to the pescadillo family. Component of the NOP7 complex, composed of erb1, nop7 and ytm1. The complex is held together by erb1, which interacts with nop7 via its N-terminal domain and with ytm1 via a high-affinity interaction between the seven-bladed beta-propeller domains of the 2 proteins. The NOP7 complex associates with the 66S pre-ribosome.

The protein localises to the nucleus. Its subcellular location is the nucleolus. It is found in the nucleoplasm. Component of the NOP7 complex, which is required for maturation of the 25S and 5.8S ribosomal RNAs and formation of the 60S ribosome. The chain is Pescadillo homolog (nop7) from Aspergillus oryzae (strain ATCC 42149 / RIB 40) (Yellow koji mold).